A 2314-amino-acid chain; its full sequence is Protein Ycf2 (2314 aa).

An ATP-binding site is contributed by 1653 to 1660 (GSIGTGRS).

This sequence belongs to the Ycf2 family.

The protein localises to the plastid. It localises to the chloroplast stroma. Functionally, probable ATPase of unknown function. Its presence in a non-photosynthetic plant (Epifagus virginiana) and experiments in tobacco indicate that it has an essential function which is probably not related to photosynthesis. The protein is Protein Ycf2 of Piper cenocladum (Ant piper).